The chain runs to 165 residues: Cyclic pyranopterin monophosphate synthase (165 aa).

Residues 76-78 (LCH) and 114-115 (ME) each bind substrate. Asp129 is a catalytic residue.

This sequence belongs to the MoaC family. In terms of assembly, homohexamer; trimer of dimers.

It carries out the reaction (8S)-3',8-cyclo-7,8-dihydroguanosine 5'-triphosphate = cyclic pyranopterin phosphate + diphosphate. The protein operates within cofactor biosynthesis; molybdopterin biosynthesis. Catalyzes the conversion of (8S)-3',8-cyclo-7,8-dihydroguanosine 5'-triphosphate to cyclic pyranopterin monophosphate (cPMP). The chain is Cyclic pyranopterin monophosphate synthase from Brucella melitensis biotype 2 (strain ATCC 23457).